Consider the following 667-residue polypeptide: DNA ligase (667 aa).

Residues 32-36 (DKDYD) and 80-81 (SL) each bind NAD(+). The active-site N6-AMP-lysine intermediate is the lysine 121. The NAD(+) site is built by arginine 143, glutamate 178, and lysine 314. Zn(2+) is bound by residues cysteine 407, cysteine 410, cysteine 423, and cysteine 429. Positions 587–667 (IVESIFKDKT…EFEKMLGRES (81 aa)) constitute a BRCT domain.

This sequence belongs to the NAD-dependent DNA ligase family. LigA subfamily. Mg(2+) serves as cofactor. The cofactor is Mn(2+).

It catalyses the reaction NAD(+) + (deoxyribonucleotide)n-3'-hydroxyl + 5'-phospho-(deoxyribonucleotide)m = (deoxyribonucleotide)n+m + AMP + beta-nicotinamide D-nucleotide.. Functionally, DNA ligase that catalyzes the formation of phosphodiester linkages between 5'-phosphoryl and 3'-hydroxyl groups in double-stranded DNA using NAD as a coenzyme and as the energy source for the reaction. It is essential for DNA replication and repair of damaged DNA. In Clostridium botulinum (strain Alaska E43 / Type E3), this protein is DNA ligase.